Here is a 361-residue protein sequence, read N- to C-terminus: MAVNGCMRLLRNGLTSACALEQSVRRLASGTLNVTVRDALNAALDEEIKRDDRVFLIGEEVAQYDGAYKISKGLWKKYGDGRIWDTPITEMAIAGLSVGAAMNGLRPICEFMSMNFSMQGIDHIINSAAKAHYMSAGRFHVPIVFRGANGAAVGVAQQHSQDFTAWFMHCPGVKVVVPYDCEDARGLLKAAVRDDNPVICLENEILYGMKFPVSPEAQSPDFVLPFGQAKIQRPGKDITIVSLSIGVDVSLHAADELAKSGIDCEVINLRCVRPLDFQTVKDSVIKTKHLVTVESGWPNCGVGAEISARVTESDAFGYLDGPILRVTGVDVPMPYAQPLETAALPQPADVVKMVKKCLNVQ.

Residues 1–27 (MAVNGCMRLLRNGLTSACALEQSVRRL) constitute a mitochondrion transit peptide. Residue glutamate 90 coordinates thiamine diphosphate. Isoleucine 143, alanine 191, valine 192, aspartate 194, and asparagine 196 together coordinate K(+).

Heterotetramer of two PDHA1 and two PDHB subunits. The heterotetramer interacts with DLAT, and is part of the multimeric pyruvate dehydrogenase complex that contains multiple copies of pyruvate dehydrogenase (E1), dihydrolipoamide acetyltransferase (DLAT, E2) and lipoamide dehydrogenase (DLD, E3). Thiamine diphosphate serves as cofactor.

It is found in the mitochondrion matrix. The enzyme catalyses N(6)-[(R)-lipoyl]-L-lysyl-[protein] + pyruvate + H(+) = N(6)-[(R)-S(8)-acetyldihydrolipoyl]-L-lysyl-[protein] + CO2. Functionally, the pyruvate dehydrogenase complex catalyzes the overall conversion of pyruvate to acetyl-CoA and CO(2), and thereby links the glycolytic pathway to the tricarboxylic cycle. This chain is Pyruvate dehydrogenase E1 component subunit beta, mitochondrial, found in Ascaris suum (Pig roundworm).